The chain runs to 355 residues: UDP-N-acetylglucosamine--N-acetylmuramyl-(pentapeptide) pyrophosphoryl-undecaprenol N-acetylglucosamine transferase (355 aa).

UDP-N-acetyl-alpha-D-glucosamine-binding positions include 15–17 (TGG), Asn-127, Arg-163, Ser-191, Ile-244, 263–268 (ALTVSE), and Gln-288.

It belongs to the glycosyltransferase 28 family. MurG subfamily.

It localises to the cell inner membrane. It carries out the reaction di-trans,octa-cis-undecaprenyl diphospho-N-acetyl-alpha-D-muramoyl-L-alanyl-D-glutamyl-meso-2,6-diaminopimeloyl-D-alanyl-D-alanine + UDP-N-acetyl-alpha-D-glucosamine = di-trans,octa-cis-undecaprenyl diphospho-[N-acetyl-alpha-D-glucosaminyl-(1-&gt;4)]-N-acetyl-alpha-D-muramoyl-L-alanyl-D-glutamyl-meso-2,6-diaminopimeloyl-D-alanyl-D-alanine + UDP + H(+). It functions in the pathway cell wall biogenesis; peptidoglycan biosynthesis. Its function is as follows. Cell wall formation. Catalyzes the transfer of a GlcNAc subunit on undecaprenyl-pyrophosphoryl-MurNAc-pentapeptide (lipid intermediate I) to form undecaprenyl-pyrophosphoryl-MurNAc-(pentapeptide)GlcNAc (lipid intermediate II). The sequence is that of UDP-N-acetylglucosamine--N-acetylmuramyl-(pentapeptide) pyrophosphoryl-undecaprenol N-acetylglucosamine transferase from Escherichia coli O127:H6 (strain E2348/69 / EPEC).